Reading from the N-terminus, the 84-residue chain is Cytoplasmic envelopment protein 3 (84 aa).

G2 is lipidated: N-myristoyl glycine; by host. The asp/Glu-rich (acidic) stretch occupies residues 40–46 (DLDDLRC).

It belongs to the herpesviridae cytoplasmic envelopment protein 3 family. In terms of assembly, interacts with cytoplasmic envelopment protein 2; this interaction is essential for the proper localization of each protein to the assembly complex and thus for the production of infectious virus. Myristoylation and palmitoylation (probably on one or more of the nearby cysteines at the N-terminus) enable membrane-binding and Golgi apparatus-specific targeting and are essential for efficient packaging. In terms of processing, phosphorylated. Phosphorylation does not seem to be required for recycling to the host Golgi apparatus. Packaging is selective for underphosphorylated forms.

Its subcellular location is the virion tegument. It localises to the virion membrane. It is found in the host cell membrane. The protein localises to the host Golgi apparatus membrane. Plays an important role in the cytoplasmic envelopment of tegument proteins and capsids during the assembly and egress processes. Also participates in viral entry at the fusion step probably by regulating the core fusion machinery. This Gallus gallus (Chicken) protein is Cytoplasmic envelopment protein 3 (MDV023).